We begin with the raw amino-acid sequence, 71 residues long: uncharacterized protein (71 aa).

Residues 1 to 16 are compositionally biased toward basic residues; the sequence is MAKSQAKKKRGHRLRN. Disordered stretches follow at residues 1-39 and 51-71; these read MAKS…RMTK and KNPY…QKAA. Residues 25 to 35 are compositionally biased toward polar residues; that stretch reads RGSTPSFSTHG. The span at 51 to 64 shows a compositional bias: basic and acidic residues; that stretch reads KNPYDHTAVDDKDF.

This is an uncharacterized protein from Bacillus subtilis (strain 168).